The primary structure comprises 474 residues: MADNDIIHTVPEMRRIRGIHFVGIGGVGMCGIAEVLANQGYAISGSDIKESPVLERLRSLGVRVDIGHRAENIDGADVVVTSTAVNTENLEVAAAHERRIPVVPRAQMLAELMRFRHGIAVAGTHGKTTTTSLTAAIMAEAGLDPTFVIGGRLNSAGTNARLGQSRYLVAEADESDASFLHLQPMSAIVTNVDADHMHTYGGDFAQLENTFIEFLHNLPFYGVAVMCVDDPVVRKLLPRVNRQVIRYGFSEDADLRAENVRQDGMVTHFRVVRAEGEPLDVSLNMPGRHNVLNALAAIAVSADEGAGDEAIIRGLNNFTGVGRRFDVQGDYHFDGGSATLVDDYGHHPREVAATIDAIREGWPGRRLAMLFQPHRYTRTQDLYEDFVEVLSGVDVLLMLEVYAAGEEPIPGADARALCRSLRKRGLEPVFVDDPDKLQGLLASQLQNGDLLVTQGAGNVGAIAKQLVAQGGGHG.

An ATP-binding site is contributed by 123–129; it reads GTHGKTT.

It belongs to the MurCDEF family.

The protein resides in the cytoplasm. The enzyme catalyses UDP-N-acetyl-alpha-D-muramate + L-alanine + ATP = UDP-N-acetyl-alpha-D-muramoyl-L-alanine + ADP + phosphate + H(+). Its pathway is cell wall biogenesis; peptidoglycan biosynthesis. Its function is as follows. Cell wall formation. This is UDP-N-acetylmuramate--L-alanine ligase from Alcanivorax borkumensis (strain ATCC 700651 / DSM 11573 / NCIMB 13689 / SK2).